Consider the following 646-residue polypeptide: EF-hand calcium-binding domain-containing protein 6 (646 aa).

6 EF-hand domains span residues 1–27, 28–63, 109–144, 214–249, 321–356, and 357–392; these read FLET…FDIP, LTPR…NYSP, DCYQ…CGCS, SSQL…FCHK, SHYH…NVQI, and LTDE…ERAA. Position 29 is a phosphothreonine (T29). The disordered stretch occupies residues 390–452; it reads RAATPTATGD…TTAIPGTPPL (63 aa). Polar residues predominate over residues 432–446; that stretch reads KPQSHPCTAASTTAI. S435 carries the post-translational modification Phosphoserine. A phosphothreonine mark is found at T439 and T449. The interval 448 to 646 is interaction with PARK7; that stretch reads GTPPLQNCDP…YNDFLRAFLQ (199 aa). EF-hand domains follow at residues 468–503, 504–539, 579–614, and 615–646; these read GCWR…FNLD, ISKE…LLKA, HCWR…YSIN, and LSEE…AFLQ. The segment at 552–646 is interaction with AR; sequence NAHKMKDSGA…YNDFLRAFLQ (95 aa).

As to quaternary structure, microtubule inner protein component of sperm flagellar doublet microtubules. Binds PARK7. Part of a ternary complex containing PARK7, EFCAB6/DJBP and AR.

It is found in the nucleus. The protein localises to the cytoplasm. It localises to the cytoskeleton. Its subcellular location is the flagellum axoneme. Negatively regulates the androgen receptor by recruiting histone deacetylase complex, and protein DJ-1 antagonizes this inhibition by abrogation of this complex. Microtubule inner protein (MIP) part of the dynein-decorated doublet microtubules (DMTs) in cilia axoneme, which is required for motile cilia beating. This chain is EF-hand calcium-binding domain-containing protein 6 (EFCAB6), found in Macaca fascicularis (Crab-eating macaque).